The sequence spans 477 residues: tRNA-2-methylthio-N(6)-dimethylallyladenosine synthase (477 aa).

The region spanning 3–120 is the MTTase N-terminal domain; sequence KKLFIKTWGC…LPEMINQIKG (118 aa). The [4Fe-4S] cluster site is built by C12, C49, C83, C157, C161, and C164. A Radical SAM core domain is found at 143–375; it reads KAEGPTAFVS…QNRITQQALR (233 aa). The region spanning 378–441 is the TRAM domain; that stretch reads RNMIDSEQRV…ANSLRGDVLR (64 aa).

It belongs to the methylthiotransferase family. MiaB subfamily. Monomer. The cofactor is [4Fe-4S] cluster.

The protein localises to the cytoplasm. It carries out the reaction N(6)-dimethylallyladenosine(37) in tRNA + (sulfur carrier)-SH + AH2 + 2 S-adenosyl-L-methionine = 2-methylsulfanyl-N(6)-dimethylallyladenosine(37) in tRNA + (sulfur carrier)-H + 5'-deoxyadenosine + L-methionine + A + S-adenosyl-L-homocysteine + 2 H(+). In terms of biological role, catalyzes the methylthiolation of N6-(dimethylallyl)adenosine (i(6)A), leading to the formation of 2-methylthio-N6-(dimethylallyl)adenosine (ms(2)i(6)A) at position 37 in tRNAs that read codons beginning with uridine. The chain is tRNA-2-methylthio-N(6)-dimethylallyladenosine synthase from Pseudoalteromonas atlantica (strain T6c / ATCC BAA-1087).